Reading from the N-terminus, the 871-residue chain is Dual O-methyltransferase/FAD-dependent monooxygenase CTB3 (871 aa).

Positions 1 to 429 are O-methyltransferase; the sequence is MMQFQRDLEA…GLLTVRSAGQ (429 aa). Aspartate 279 serves as a coordination point for S-adenosyl-L-methionine. The active-site Proton acceptor is the histidine 331. Residues 430 to 871 are FAD-dependent monooxygenase; the sequence is TALSGTNTLT…NLVDCSEFVF (442 aa). Residues glutamate 485, arginine 569, and alanine 806 each coordinate FAD.

This sequence in the C-terminal section; belongs to the paxM FAD-dependent monooxygenase family. In the N-terminal section; belongs to the class I-like SAM-binding methyltransferase superfamily. Cation-independent O-methyltransferase family. COMT subfamily.

It carries out the reaction nor-toralactone + S-adenosyl-L-methionine = toralactone + S-adenosyl-L-homocysteine + H(+). The catalysed reaction is toralactone + NADH + O2 + H(+) = 1-(3,4,5-trihydroxy-7-methoxynaphthalen-2-yl)propan-2-one + CO2 + NAD(+). It participates in mycotoxin biosynthesis. Functionally, dual O-methyltransferase/FAD-dependent monooxygenase; part of the gene cluster that mediates the biosynthesis of cercosporin, a light-activated, non-host-selective toxin. The perylenequinone chromophore of cercosporin absorbs light energy to attain an electronically-activated triplet state and produces active oxygen species such as the hydroxyl radical, superoxide, hydrogen peroxide or singlet oxygen upon reaction with oxygen molecules. These reactive oxygen species cause damage to various cellular components including lipids, proteins and nucleic acids. The first step of cercosporin biosynthesis is performed by the polyketide synthase CTB1 which catalyzes the formation of nor-toralactone. The starter unit acyltransferase (SAT) domain of CTB1 initiates polyketide extension by the selective utilization of acetyl-CoA, which is elongated to the heptaketide in the beta-ketoacyl synthase (KS) domain by successive condensations with six malonyl units introduced by the malonyl acyltransferase (MAT) domain. The product template (PT) domain catalyzes C4-C9 and C2-C11 aldol cyclizations and dehydrations to a trihydroxynaphthalene, which is thought to be delivered to the thioesterase (TE) domain for product release. The bifunctional enzyme CTB3 then methylates nor-toralactone to toralactone before conducting an unusual oxidative aromatic ring opening. The O-methyltransferase CTB2 further methylates the nascent OH-6 of the CBT3 product, blocking further oxidation at this site before the reductase CTB6 reduces the 2-oxopropyl ketone at position C7, giving naphthalene. The FAD-dependent monooxygenase CTB5 in concert with the multicopper oxidase CTB12 are responsible for homodimerization of naphthalene with CTB7 installing the dioxepine moiety, finally producing cercosporin. The fasciclin domain-containing protein CTB11 might act with CTB5 and CTB12 whereas the roles of CTB9 and CTB10 have still to be elucidated. In Cercospora nicotianae (Barn spot disease fungus), this protein is Dual O-methyltransferase/FAD-dependent monooxygenase CTB3.